The following is a 128-amino-acid chain: Fluoride-specific ion channel FluC (128 aa).

4 consecutive transmembrane segments (helical) span residues 5–25 (LFIS…GLLF), 34–54 (FGAL…LGLF), 67–87 (FLIT…SEVV), and 99–119 (FCVL…GIWI). Na(+)-binding residues include Gly-74 and Thr-77.

Belongs to the fluoride channel Fluc/FEX (TC 1.A.43) family.

The protein localises to the cell inner membrane. It carries out the reaction fluoride(in) = fluoride(out). Na(+) is not transported, but it plays an essential structural role and its presence is essential for fluoride channel function. Its function is as follows. Fluoride-specific ion channel. Important for reducing fluoride concentration in the cell, thus reducing its toxicity. The chain is Fluoride-specific ion channel FluC from Haemophilus influenzae (strain PittEE).